The chain runs to 84 residues: Exendin-2-long (84 aa).

A signal peptide spans 1–23 (MKSILWLCVFGLLIATLFPVSWQ). The propeptide occupies 24 to 44 (MAIKSRLSSEDSETDQRLFES).

Belongs to the glucagon family. Post-translationally, an amidated Pro-81 is described. Such an amidation is however not compatible with the sequence displayed. Indeed cDNAs do not encode a Gly that could serve as substrate for peptide alpha-amidation. Expressed by the venom gland. Not expressed in the pancreas, liver, stomach, small intestine, lung, heart, kidney, spleen, ovary, and brain.

Its subcellular location is the secreted. Has vasoactive intestinal peptide(VIP)/secretin-like biological activity. Interacts with rat and human VIP receptors 1 (VIPR1) and 2 (VIPR2), with the highest affinity for the human VIPR2. Induces hypotension that is mediated by relaxation of cardiac smooth muscle. This vasodilation may not be transduced by VIP or PACAP receptors. The chain is Exendin-2-long from Heloderma suspectum (Gila monster).